The sequence spans 416 residues: Glutamyl-tRNA reductase (416 aa).

Substrate contacts are provided by residues 49 to 52 (TCNR), serine 105, 110 to 112 (EPQ), and glutamine 116. Residue cysteine 50 is the Nucleophile of the active site. Residue 185–190 (GAGETI) participates in NADP(+) binding.

It belongs to the glutamyl-tRNA reductase family. As to quaternary structure, homodimer.

It carries out the reaction (S)-4-amino-5-oxopentanoate + tRNA(Glu) + NADP(+) = L-glutamyl-tRNA(Glu) + NADPH + H(+). It participates in porphyrin-containing compound metabolism; protoporphyrin-IX biosynthesis; 5-aminolevulinate from L-glutamyl-tRNA(Glu): step 1/2. Functionally, catalyzes the NADPH-dependent reduction of glutamyl-tRNA(Glu) to glutamate 1-semialdehyde (GSA). The protein is Glutamyl-tRNA reductase of Shewanella sediminis (strain HAW-EB3).